The primary structure comprises 661 residues: UvrABC system protein B (661 aa).

One can recognise a Helicase ATP-binding domain in the interval 25 to 182 (KGLNNKKRSQ…NDLVNLQYER (158 aa)). 38–45 (GITGSGKT) is a binding site for ATP. The short motif at 91–114 (YYDYYQPEAYIPKTDVFIEKDSSI) is the Beta-hairpin element. Residues 430 to 592 (QVEDLVGEIQ…IIPKTINRTI (163 aa)) form the Helicase C-terminal domain. The UVR domain maps to 621 to 656 (KAHIDKLRKEMLKAASNLEFEQAAKLRDQLKTLEEA).

It belongs to the UvrB family. Forms a heterotetramer with UvrA during the search for lesions. Interacts with UvrC in an incision complex.

The protein resides in the cytoplasm. The UvrABC repair system catalyzes the recognition and processing of DNA lesions. A damage recognition complex composed of 2 UvrA and 2 UvrB subunits scans DNA for abnormalities. Upon binding of the UvrA(2)B(2) complex to a putative damaged site, the DNA wraps around one UvrB monomer. DNA wrap is dependent on ATP binding by UvrB and probably causes local melting of the DNA helix, facilitating insertion of UvrB beta-hairpin between the DNA strands. Then UvrB probes one DNA strand for the presence of a lesion. If a lesion is found the UvrA subunits dissociate and the UvrB-DNA preincision complex is formed. This complex is subsequently bound by UvrC and the second UvrB is released. If no lesion is found, the DNA wraps around the other UvrB subunit that will check the other stand for damage. The sequence is that of UvrABC system protein B from Rickettsia bellii (strain RML369-C).